Consider the following 305-residue polypeptide: tRNA uridine(34) hydroxylase (305 aa).

The Rhodanese domain occupies 125–219 (ADENTVVVDT…YLEEVPREDS (95 aa)). The Cysteine persulfide intermediate role is filled by cysteine 179.

Belongs to the TrhO family.

The catalysed reaction is uridine(34) in tRNA + AH2 + O2 = 5-hydroxyuridine(34) in tRNA + A + H2O. Catalyzes oxygen-dependent 5-hydroxyuridine (ho5U) modification at position 34 in tRNAs. This is tRNA uridine(34) hydroxylase from Brucella anthropi (strain ATCC 49188 / DSM 6882 / CCUG 24695 / JCM 21032 / LMG 3331 / NBRC 15819 / NCTC 12168 / Alc 37) (Ochrobactrum anthropi).